The chain runs to 219 residues: tRNA (guanine-N(7)-)-methyltransferase (219 aa).

Glu-46, Glu-71, Asn-100, and Asp-122 together coordinate S-adenosyl-L-methionine. The active site involves Asp-122. Substrate-binding positions include Lys-126, Asp-158, and 199-202; that span reads TEYE.

Belongs to the class I-like SAM-binding methyltransferase superfamily. TrmB family.

The catalysed reaction is guanosine(46) in tRNA + S-adenosyl-L-methionine = N(7)-methylguanosine(46) in tRNA + S-adenosyl-L-homocysteine. Its pathway is tRNA modification; N(7)-methylguanine-tRNA biosynthesis. Catalyzes the formation of N(7)-methylguanine at position 46 (m7G46) in tRNA. In Leuconostoc citreum (strain KM20), this protein is tRNA (guanine-N(7)-)-methyltransferase.